The following is a 130-amino-acid chain: Small ribosomal subunit protein uS11c (130 aa).

Belongs to the universal ribosomal protein uS11 family. Part of the 30S ribosomal subunit.

Its subcellular location is the plastid. The protein localises to the chloroplast. The chain is Small ribosomal subunit protein uS11c from Anthoceros angustus (Hornwort).